The primary structure comprises 507 residues: Probable bifunctional methylthioribulose-1-phosphate dehydratase/enolase-phosphatase E1 (507 aa).

N-acetylalanine is present on alanine 2. Residues 2 to 237 (AVAAAAMIGL…AIKLHQLGLD (236 aa)) are methylthioribulose-1-phosphate dehydratase. Cysteine 109 contributes to the substrate binding site. 2 residues coordinate Zn(2+): histidine 127 and histidine 129. The Proton donor/acceptor role is filled by glutamate 152. Residue histidine 202 participates in Zn(2+) binding. The segment at 268–507 (IVLDIEGTTT…FKTVTSFSQI (240 aa)) is enolase-phosphatase E1. Aspartate 271 and glutamate 273 together coordinate Mg(2+). Substrate is bound by residues 406-407 (SS) and lysine 440. Aspartate 466 is a binding site for Mg(2+).

The protein in the N-terminal section; belongs to the aldolase class II family. MtnB subfamily. This sequence in the C-terminal section; belongs to the HAD-like hydrolase superfamily. MasA/MtnC family. Zn(2+) is required as a cofactor. Mg(2+) serves as cofactor.

It catalyses the reaction 5-(methylsulfanyl)-D-ribulose 1-phosphate = 5-methylsulfanyl-2,3-dioxopentyl phosphate + H2O. The catalysed reaction is 5-methylsulfanyl-2,3-dioxopentyl phosphate + H2O = 1,2-dihydroxy-5-(methylsulfanyl)pent-1-en-3-one + phosphate. The protein operates within amino-acid biosynthesis; L-methionine biosynthesis via salvage pathway; L-methionine from S-methyl-5-thio-alpha-D-ribose 1-phosphate: step 2/6. It participates in amino-acid biosynthesis; L-methionine biosynthesis via salvage pathway; L-methionine from S-methyl-5-thio-alpha-D-ribose 1-phosphate: step 3/6. Its pathway is amino-acid biosynthesis; L-methionine biosynthesis via salvage pathway; L-methionine from S-methyl-5-thio-alpha-D-ribose 1-phosphate: step 4/6. The protein is Probable bifunctional methylthioribulose-1-phosphate dehydratase/enolase-phosphatase E1 of Arabidopsis thaliana (Mouse-ear cress).